Here is a 384-residue protein sequence, read N- to C-terminus: UPF0284 protein alr0297 (384 aa).

It belongs to the UPF0284 family.

This is UPF0284 protein alr0297 from Nostoc sp. (strain PCC 7120 / SAG 25.82 / UTEX 2576).